The following is a 470-amino-acid chain: Serine hydroxymethyltransferase 5 (470 aa).

The residue at position 244 (K244) is an N6-(pyridoxal phosphate)lysine.

It belongs to the SHMT family. In terms of assembly, homotetramer. Requires pyridoxal 5'-phosphate as cofactor.

It localises to the cytoplasm. The catalysed reaction is (6R)-5,10-methylene-5,6,7,8-tetrahydrofolate + glycine + H2O = (6S)-5,6,7,8-tetrahydrofolate + L-serine. It functions in the pathway one-carbon metabolism; tetrahydrofolate interconversion. Its function is as follows. Catalyzes the interconversion of serine and glycine. This is Serine hydroxymethyltransferase 5 (SHM5) from Arabidopsis thaliana (Mouse-ear cress).